The chain runs to 127 residues: uncharacterized protein (127 aa).

One can recognise a VOC domain in the interval 1-127 (MKIVVTSIFV…CGNLIQIVQK (127 aa)).

The protein belongs to the glyoxalase I family.

This is an uncharacterized protein from Bacillus subtilis (strain 168).